The sequence spans 484 residues: ATP synthase subunit beta (484 aa).

ATP is bound at residue 169–176 (GGAGVGKT).

It belongs to the ATPase alpha/beta chains family. In terms of assembly, F-type ATPases have 2 components, CF(1) - the catalytic core - and CF(0) - the membrane proton channel. CF(1) has five subunits: alpha(3), beta(3), gamma(1), delta(1), epsilon(1). CF(0) has three main subunits: a(1), b(2) and c(9-12). The alpha and beta chains form an alternating ring which encloses part of the gamma chain. CF(1) is attached to CF(0) by a central stalk formed by the gamma and epsilon chains, while a peripheral stalk is formed by the delta and b chains.

The protein localises to the cell membrane. The enzyme catalyses ATP + H2O + 4 H(+)(in) = ADP + phosphate + 5 H(+)(out). Its function is as follows. Produces ATP from ADP in the presence of a proton gradient across the membrane. The catalytic sites are hosted primarily by the beta subunits. The protein is ATP synthase subunit beta of Nocardioides sp. (strain ATCC BAA-499 / JS614).